A 291-amino-acid polypeptide reads, in one-letter code: 4-hydroxy-tetrahydrodipicolinate synthase (291 aa).

Thr-45 serves as a coordination point for pyruvate. Tyr-133 acts as the Proton donor/acceptor in catalysis. The Schiff-base intermediate with substrate role is filled by Lys-161. Ile-203 is a pyruvate binding site.

The protein belongs to the DapA family. In terms of assembly, homotetramer.

It is found in the cytoplasm. It carries out the reaction L-aspartate 4-semialdehyde + pyruvate = (2S,4S)-4-hydroxy-2,3,4,5-tetrahydrodipicolinate + H2O + H(+). The protein operates within amino-acid biosynthesis; L-lysine biosynthesis via DAP pathway; (S)-tetrahydrodipicolinate from L-aspartate: step 3/4. Its activity is regulated as follows. Is allosterically feedback inhibited by lysine; the N.meningitidis enzyme is significantly more sensitive to lysine than the E.coli enzyme. Shows substrate inhibition by (S)-ASA, with a Ki of 1.7 mM. In terms of biological role, catalyzes the condensation of (S)-aspartate-beta-semialdehyde [(S)-ASA] and pyruvate to 4-hydroxy-tetrahydrodipicolinate (HTPA). The polypeptide is 4-hydroxy-tetrahydrodipicolinate synthase (Neisseria meningitidis serogroup B (strain ATCC BAA-335 / MC58)).